A 655-amino-acid polypeptide reads, in one-letter code: Sphingomyelin phosphodiesterase 3 (655 aa).

At 1-10 the chain is on the cytoplasmic side; the sequence is MVLYTTPFPN. An intramembrane region (helical) is located at residues 11-31; sequence SCLSALHAVSWALIFPCYWLV. The Cytoplasmic portion of the chain corresponds to 32-64; sequence DRLVASFIPTTYEKRQRADDPCYLQLFCTVLFT. 2 S-palmitoyl cysteine lipidation sites follow: Cys-53 and Cys-59. Residues 65-85 constitute an intramembrane region (helical); that stretch reads PVYLALLVAALPFAFLGFIFW. Residues 86–655 are Cytoplasmic-facing; the sequence is SPLQSARRPY…LMVSAGEEEA (570 aa). At Ser-178 the chain carries Phosphoserine. 2 disordered regions span residues 209–237 and 250–320; these read VEYKGDGGRHPSDEAANGPASGEQADGSL and GGRA…SNSK. Residues 211–221 are compositionally biased toward basic and acidic residues; it reads YKGDGGRHPSD. The residue at position 289 (Ser-289) is a Phosphoserine. Mg(2+) is bound at residue Glu-362. 2 S-palmitoyl cysteine lipidation sites follow: Cys-395 and Cys-396. His-639 acts as the Proton acceptor in catalysis.

This sequence belongs to the neutral sphingomyelinase family. The cofactor is Mg(2+). Palmitoylated, palmitoylation-deficient proteins are targeted for lysosomal degradation. In terms of tissue distribution, in brain sections, it is restricted to neurons and especially prominent in large cells, including Purkinje cells, pyramidal cells, neurons of the dentate gyrus granular layer, and neurons in the pontine nuclei. Also present in the hypothalamic nuclei, neurons in the piriform cortex, and nuclei of the brainstem (at protein level). Mainly expressed in brain and jejunum. Weakly or not expressed in heart, spleen, lung, liver, kidney and testis.

Its subcellular location is the golgi apparatus membrane. It localises to the cell membrane. It carries out the reaction a sphingomyelin + H2O = phosphocholine + an N-acylsphing-4-enine + H(+). It catalyses the reaction N-(15Z-tetracosenoyl)sphing-4-enine-1-phosphocholine + H2O = N-(15Z-tetracosenoyl)-sphing-4-enine + phosphocholine + H(+). The enzyme catalyses N-(tetracosanoyl)-sphing-4-enine-1-phosphocholine + H2O = N-tetracosanoyl-sphing-4-enine + phosphocholine + H(+). The catalysed reaction is an N-(acyl)-sphingosylphosphocholine + H2O = an N-acyl-sphingoid base + phosphocholine + H(+). It carries out the reaction 1-hexadecanoyl-sn-glycero-3-phosphocholine + H2O = 1-hexadecanoyl-sn-glycerol + phosphocholine + H(+). It catalyses the reaction 1-O-octadecyl-sn-glycero-3-phosphocholine + H2O = 1-O-octadecyl-sn-glycerol + phosphocholine + H(+). The enzyme catalyses a sphingosylphosphocholine + H2O = a sphingoid base + phosphocholine + H(+). The catalysed reaction is N-(hexadecanoyl)-sphing-4-enine-1-phosphocholine + H2O = N-hexadecanoylsphing-4-enine + phosphocholine + H(+). It participates in lipid metabolism; sphingolipid metabolism. With respect to regulation, inhibited by nSMase inhibitor GW4869. Binding of anionic phospholipids (APLs) such as phosphatidylserine (PS) and phosphatidic acid (PA) increases enzymatic activity. Functionally, catalyzes the hydrolysis of sphingomyelin to form ceramide and phosphocholine. Ceramide mediates numerous cellular functions, such as apoptosis and growth arrest, and is capable of regulating these 2 cellular events independently. Also hydrolyzes sphingosylphosphocholine. Binds to anionic phospholipids (APLs) such as phosphatidylserine (PS) and phosphatidic acid (PA) that modulate enzymatic activity and subcellular location. Regulates the cell cycle by acting as a growth suppressor in confluent cells. Acts as a regulator of postnatal development and participates in bone and dentin mineralization. May be involved in IL-1-beta-induced JNK activation in hepatocytes. May act as a mediator in transcriptional regulation of NOS2/iNOS via the NF-kappa-B activation under inflammatory conditions. The protein is Sphingomyelin phosphodiesterase 3 of Rattus norvegicus (Rat).